Here is a 415-residue protein sequence, read N- to C-terminus: MGRDETETYITVPSFFKCPISLDVMRSPVSLCTGVTYDRASIQRWLDGGNNTCPATMQLLKTKDFVPNLTLQRLINIWSDSIGRRHNGDSPVLNPPSGREVPTKEEVNVLLERLMSLENLMKIVRFVKDSDSNREFLSKKMEFVPMLVDIIRTKKTKIELVIMAIRILDSIKVDRERLSNLMLANDGGDCLTAILLAIQRGNLESKIESVRVLDWISFDAKSKLMIAERDGVLTEMMKSISITESSDPSLIEASLSFLITISKSKRVRSKLIAAKAITKIKDILLTETLTNVAVTEKSLKLLETLSSKREGRLEICGDDNGRCVEGVVKKLLKVSTTATEHAVTILWCLCYVFREDKTVEETVERSNGVTKLLVVIQSNCSAMVRQMAKDLIKVLKFNSSALAAYETKTTHIMPF.

Residues Thr11–Arg85 form the U-box domain. ARM repeat units lie at residues Lys221–Lys263 and Lys265–Ser307.

As to quaternary structure, binds to SD129 and SD25.

It carries out the reaction S-ubiquitinyl-[E2 ubiquitin-conjugating enzyme]-L-cysteine + [acceptor protein]-L-lysine = [E2 ubiquitin-conjugating enzyme]-L-cysteine + N(6)-ubiquitinyl-[acceptor protein]-L-lysine.. It functions in the pathway protein modification; protein ubiquitination. In terms of biological role, functions as an E3 ubiquitin ligase. This chain is U-box domain-containing protein 29 (PUB29), found in Arabidopsis thaliana (Mouse-ear cress).